The following is a 502-amino-acid chain: Na(+)/H(+) antiporter NhaB (502 aa).

Transmembrane regions (helical) follow at residues 27 to 49, 66 to 86, 95 to 115, 128 to 148, 149 to 169, 241 to 261, 299 to 318, 350 to 370, 394 to 414, 450 to 470, and 477 to 497; these read AFLV…VLIL, PGGL…ESVF, VILL…LLLY, IVLS…LDAL, TVTA…HQFA, FFLQ…VTCI, IAAL…SLAL, FEEA…VAVI, MFFI…VATV, ATPN…APLI, and MVLM…IAVY.

The protein belongs to the NhaB Na(+)/H(+) (TC 2.A.34) antiporter family.

The protein localises to the cell inner membrane. The enzyme catalyses 2 Na(+)(in) + 3 H(+)(out) = 2 Na(+)(out) + 3 H(+)(in). In terms of biological role, na(+)/H(+) antiporter that extrudes sodium in exchange for external protons. This chain is Na(+)/H(+) antiporter NhaB, found in Teredinibacter turnerae (strain ATCC 39867 / T7901).